A 156-amino-acid polypeptide reads, in one-letter code: MPRRRSVEPRKILPDPKFGSELLAKFINVLMVDGKKSTAESIIYGALETLAQRTGKEALEAFEAALENVRPTVEVKSRRVGGSTYQVPVEVRPSRRNALAMRWIVEAARKRGDKSMALRLANELSDAADNKGTAVKKREDVHRMAEANKAFAHFRW.

Belongs to the universal ribosomal protein uS7 family. In terms of assembly, part of the 30S ribosomal subunit. Contacts proteins S9 and S11.

In terms of biological role, one of the primary rRNA binding proteins, it binds directly to 16S rRNA where it nucleates assembly of the head domain of the 30S subunit. Is located at the subunit interface close to the decoding center, probably blocks exit of the E-site tRNA. This is Small ribosomal subunit protein uS7 from Actinobacillus pleuropneumoniae serotype 5b (strain L20).